The primary structure comprises 411 residues: Putative binding protein BRA0748/BS1330_II0741 (411 aa).

An N-terminal signal peptide occupies residues 1-25 (MLIRKWKAGLLAGLSILALASSADA).

The protein belongs to the bacterial solute-binding protein 1 family. The complex is composed of two ATP-binding proteins (BRA0745), two transmembrane proteins (BRA0749) and a solute-binding protein (BRA0748).

Its subcellular location is the periplasm. Probably part of an ABC transporter complex. In Brucella suis biovar 1 (strain 1330), this protein is Putative binding protein BRA0748/BS1330_II0741.